Consider the following 425-residue polypeptide: (S)-6-hydroxynicotine oxidase (425 aa).

FAD is bound by residues S12, E31, 38–39, and 56–59; these read GR and GGAY. N166 provides a ligand contact to (S)-6-hydroxynicotine. V226 lines the FAD pocket. (S)-6-hydroxynicotine-binding residues include Y311, F326, and W371. FAD is bound by residues S398 and 406-408; that span reads GYI. Y407 serves as a coordination point for (S)-6-hydroxynicotine.

Belongs to the flavin monoamine oxidase family. As to quaternary structure, homodimer. Requires FAD as cofactor.

The protein localises to the cytoplasm. The catalysed reaction is (S)-6-hydroxynicotine + O2 + H2O = 6-hydroxypseudooxynicotine + H2O2. It catalyses the reaction (S)-6-hydroxynicotine + O2 = 6-hydroxy-N-methylmyosmine + H2O2. Its pathway is alkaloid degradation; nicotine degradation; 6-hydroxypseudooxynicotine from nicotine (S-isomer route): step 2/2. Its activity is regulated as follows. Inhibited by (R)-6-hydroxynicotine. Inhibited by high concentrations of phenanthroline. Activity is strongly affected by Hg(2+) and p-chloromercuriphenylsulfonate, but not by N-ethylmaleimide and 5,5'-dithiobis-(2-nitrobenzoate). Functionally, involved in the degradation of L-nicotine. Catalyzes the oxidation of (S)-6-hydroxynicotine (6-hydroxy-L-nicotine) to 6-hydroxypseudooxynicotine. Oxidation of the pyrrolidine ring of (S)-6-hydroxynicotine leads to the formation of the optically inactive 6-hydroxy-N-methylmyosmine, which hydrolyzes spontaneously to 6-hydroxypseudooxynicotine. Acts with absolute stereospecificity on the L-form of 6-hydroxynicotine. Can also use (S)-6-hydroxynornicotine. The polypeptide is (S)-6-hydroxynicotine oxidase (Paenarthrobacter nicotinovorans (Arthrobacter nicotinovorans)).